Reading from the N-terminus, the 345-residue chain is MMSKYPLLGMTLIELQSLVKRLGMPGFAAKQIASWLYDKKVTSIDEMTNLSLKYRELLKQNYEVGAEAPVEEMRSVDGTVKYLYPVGENHFVESVYIPDDERATLCISSQVGCKMNCKFCMTGKQGYSANLTAHQIINQIHSLPERDKLTNVVMMGMGEPLDNLEEVLKALDILTGSYGYAWSPKRITVSTVGLRKGLRRFIEESDCHLAISLHSPVTAQRAELMPAEKAFSITEMVELLKNYDFSKQRRLSFEYIVFKGLNDSQVYAKELLKLLRGLDCRMNLIRFHSIPGVALEGADMDTMTRFRDYLTTHGLFTTIRASRGEDIFAACGMLSTAKQEENNKS.

The active-site Proton acceptor is the glutamate 93. The Radical SAM core domain occupies 99–326 (DDERATLCIS…TTIRASRGED (228 aa)). A disulfide bond links cysteine 106 and cysteine 331. [4Fe-4S] cluster is bound by residues cysteine 113, cysteine 117, and cysteine 120. Residues 158 to 159 (GE), serine 190, 212 to 214 (SLH), and histidine 288 contribute to the S-adenosyl-L-methionine site. Catalysis depends on cysteine 331, which acts as the S-methylcysteine intermediate.

The protein belongs to the radical SAM superfamily. RlmN family. [4Fe-4S] cluster is required as a cofactor.

It localises to the cytoplasm. It catalyses the reaction adenosine(2503) in 23S rRNA + 2 reduced [2Fe-2S]-[ferredoxin] + 2 S-adenosyl-L-methionine = 2-methyladenosine(2503) in 23S rRNA + 5'-deoxyadenosine + L-methionine + 2 oxidized [2Fe-2S]-[ferredoxin] + S-adenosyl-L-homocysteine. The catalysed reaction is adenosine(37) in tRNA + 2 reduced [2Fe-2S]-[ferredoxin] + 2 S-adenosyl-L-methionine = 2-methyladenosine(37) in tRNA + 5'-deoxyadenosine + L-methionine + 2 oxidized [2Fe-2S]-[ferredoxin] + S-adenosyl-L-homocysteine. Functionally, specifically methylates position 2 of adenine 2503 in 23S rRNA and position 2 of adenine 37 in tRNAs. The protein is Probable dual-specificity RNA methyltransferase RlmN of Bacteroides thetaiotaomicron (strain ATCC 29148 / DSM 2079 / JCM 5827 / CCUG 10774 / NCTC 10582 / VPI-5482 / E50).